The following is a 496-amino-acid chain: Cytochrome P450 71D181 (496 aa).

Residues 1 to 21 traverse the membrane as a helical; Signal-anchor for type II membrane protein segment; that stretch reads MDISILWVAIILVISSYFIFM. Cysteine 435 provides a ligand contact to heme. Residues 471–496 are disordered; sequence MSETPGLSGPRKNPLIMVPTIHNPTS.

This sequence belongs to the cytochrome P450 family. Requires heme as cofactor.

Its subcellular location is the membrane. It catalyses the reaction gamma-terpinene + 2 reduced [NADPH--hemoprotein reductase] + 2 O2 = carvacrol + 2 oxidized [NADPH--hemoprotein reductase] + 3 H2O + 2 H(+). The catalysed reaction is (4S)-limonene + reduced [NADPH--hemoprotein reductase] + O2 = (1S,5R)-carveol + oxidized [NADPH--hemoprotein reductase] + H2O + H(+). The enzyme catalyses (4R)-limonene + reduced [NADPH--hemoprotein reductase] + O2 = (1R,5S)-carveol + oxidized [NADPH--hemoprotein reductase] + H2O + H(+). It carries out the reaction alpha-terpinene + 2 reduced [NADPH--hemoprotein reductase] + 2 O2 = carvacrol + 2 oxidized [NADPH--hemoprotein reductase] + 3 H2O + 2 H(+). It participates in secondary metabolite biosynthesis; terpenoid biosynthesis. Its function is as follows. Involved in the biosynthesis of phenolic monoterpenes natural products thymol and carvacrol which have a broad range of biological activities acting as antimicrobial compounds, insecticides, antioxidants and pharmaceutical agents. Catalyzes the C2-hydroxylation of gamma-terpinene and alpha-terpinene to produce carvacrol. Also mediates the C6-hydroxylation of (4S)-limonene and (4R)-limonene to form carveol. The sequence is that of Cytochrome P450 71D181 from Thymus vulgaris (Thyme).